The following is a 401-amino-acid chain: 4-hydroxy-3-methylbut-2-enyl diphosphate reductase (401 aa).

Cys66 is a binding site for [4Fe-4S] cluster. His96 lines the (2E)-4-hydroxy-3-methylbut-2-enyl diphosphate pocket. Position 96 (His96) interacts with dimethylallyl diphosphate. His96 is a binding site for isopentenyl diphosphate. Cys157 contributes to the [4Fe-4S] cluster binding site. His185 contacts (2E)-4-hydroxy-3-methylbut-2-enyl diphosphate. His185 contacts dimethylallyl diphosphate. Residue His185 participates in isopentenyl diphosphate binding. Glu187 serves as the catalytic Proton donor. Thr250 lines the (2E)-4-hydroxy-3-methylbut-2-enyl diphosphate pocket. Residue Cys288 coordinates [4Fe-4S] cluster. Positions 317, 318, 319, and 381 each coordinate (2E)-4-hydroxy-3-methylbut-2-enyl diphosphate. The dimethylallyl diphosphate site is built by Ser317, Ser318, Asn319, and Ser381. Residues Ser317, Ser318, Asn319, and Ser381 each contribute to the isopentenyl diphosphate site.

Belongs to the IspH family. [4Fe-4S] cluster serves as cofactor.

The enzyme catalyses isopentenyl diphosphate + 2 oxidized [2Fe-2S]-[ferredoxin] + H2O = (2E)-4-hydroxy-3-methylbut-2-enyl diphosphate + 2 reduced [2Fe-2S]-[ferredoxin] + 2 H(+). The catalysed reaction is dimethylallyl diphosphate + 2 oxidized [2Fe-2S]-[ferredoxin] + H2O = (2E)-4-hydroxy-3-methylbut-2-enyl diphosphate + 2 reduced [2Fe-2S]-[ferredoxin] + 2 H(+). The protein operates within isoprenoid biosynthesis; dimethylallyl diphosphate biosynthesis; dimethylallyl diphosphate from (2E)-4-hydroxy-3-methylbutenyl diphosphate: step 1/1. It functions in the pathway isoprenoid biosynthesis; isopentenyl diphosphate biosynthesis via DXP pathway; isopentenyl diphosphate from 1-deoxy-D-xylulose 5-phosphate: step 6/6. In terms of biological role, catalyzes the conversion of 1-hydroxy-2-methyl-2-(E)-butenyl 4-diphosphate (HMBPP) into a mixture of isopentenyl diphosphate (IPP) and dimethylallyl diphosphate (DMAPP). Acts in the terminal step of the DOXP/MEP pathway for isoprenoid precursor biosynthesis. This Prochlorococcus marinus (strain NATL1A) protein is 4-hydroxy-3-methylbut-2-enyl diphosphate reductase.